Consider the following 428-residue polypeptide: GTPase Obg (428 aa).

The region spanning 1–158 (MFVDQVKIYV…RDVILELKVL (158 aa)) is the Obg domain. Positions 159-329 (ADVGLVGFPS…LLFEVANLIE (171 aa)) constitute an OBG-type G domain. GTP is bound by residues 165 to 172 (GFPSVGKS), 190 to 194 (FTTIV), 212 to 215 (DLPG), 282 to 285 (NKMD), and 310 to 312 (SAV). Residues S172 and T192 each coordinate Mg(2+). Positions 350 to 428 (KFETEGVKFD…ILEYEFEFID (79 aa)) constitute an OCT domain.

It belongs to the TRAFAC class OBG-HflX-like GTPase superfamily. OBG GTPase family. Monomer. Mg(2+) is required as a cofactor.

It is found in the cytoplasm. Its function is as follows. An essential GTPase which binds GTP, GDP and possibly (p)ppGpp with moderate affinity, with high nucleotide exchange rates and a fairly low GTP hydrolysis rate. Plays a role in control of the cell cycle, stress response, ribosome biogenesis and in those bacteria that undergo differentiation, in morphogenesis control. This chain is GTPase Obg, found in Bacillus thuringiensis (strain Al Hakam).